The primary structure comprises 318 residues: Myeloid-associated differentiation marker (318 aa).

2 MARVEL domains span residues 25–157 (ALTQ…ARPG) and 162–315 (YMAT…RLVF). 8 helical membrane-spanning segments follow: residues 35 to 55 (LLQLVSTCVAFSLVASVGAWT), 58 to 78 (MGNWAMFTWCFCFAVTLIILI), 95 to 115 (FPITFACYAALFCLSSSIIYP), 131 to 151 (AIAATTFSCVACLAYATEVAW), 165 to 185 (TVPGLLKVFETFVACIIFAFI), 197 to 217 (LEWCVAVYAICFILAAVTVLL), 233 to 253 (FLSGLALLSVLLYATAIVLWP), and 290 to 310 (LAVSILTGINLLAYVSDLVYS).

It belongs to the MAL family.

The protein resides in the membrane. In Rattus norvegicus (Rat), this protein is Myeloid-associated differentiation marker (Myadm).